The sequence spans 517 residues: Protein IQ-DOMAIN 13 (517 aa).

The tract at residues 1–11 (MGKKGSWFSAI) is calmodulin-binding. Disordered regions lie at residues 1-60 (MGKK…FLPI) and 81-147 (VFRP…PRAV). Over residues 40–49 (KKKKGFGKKL) the composition is skewed to basic residues. Polar residues predominate over residues 89–99 (DRANSSSTSVA). Over residues 134–144 (PKPPSPKPPSP) the composition is skewed to pro residues. IQ domains are found at residues 168–196 (KNAYAIKIQAAFRGYMARRSFRALKGLVR) and 197–218 (LQGVVRGHSVKRQTMNAMKYMQ). Disordered regions lie at residues 324–407 (QPFR…LTSC) and 425–452 (KLRANSNPKERMDRTPVSTNEKRRSSFP). The segment covering 328–342 (LTPTRPSLSPQPQSS) has biased composition (low complexity). Positions 343–367 (NQNHFRLNNSFDTSTPNSSKSTFVT) are enriched in polar residues. Residues 432 to 448 (PKERMDRTPVSTNEKRR) show a composition bias toward basic and acidic residues.

Belongs to the IQD family. In terms of assembly, binds to multiple calmodulin (CaM) in the presence of Ca(2+) and CaM-like proteins. As to expression, expressed in vessels of roots, cotyledons and leaves, as well as in trichomes.

The protein resides in the cell membrane. It is found in the cytoplasm. Its subcellular location is the cytoskeleton. Functionally, may be involved in cooperative interactions with calmodulins or calmodulin-like proteins. Recruits calmodulin proteins to microtubules, thus being a potential scaffold in cellular signaling and trafficking. Regulates the formation of oval xylem secondary cell-wall deposition pits through microtubule-dependent lateral inhibition of Rho GTPase domains, thus confining the area of active ROP domains within the lattice of the cortical microtubules. May associate with nucleic acids and regulate gene expression at the transcriptional or post-transcriptional level. The sequence is that of Protein IQ-DOMAIN 13 from Arabidopsis thaliana (Mouse-ear cress).